We begin with the raw amino-acid sequence, 418 residues long: MAEQLAFLIGGIIGGLLLLIGVSCCLWRRFCATFTYEELPETSDPATISYFSRKEDRLYQYSGTPPGRLPSVPFVVPPSHQGRDWVPLHGGDWAVAPQDPCPVPEHMACTSSAKPGDACEMGSINPELYKSPEDTSETGFPDGCLGRLWFSVEYQQESERLLVGLIKAQQLQVPSETCSTLVKLHLLPDERRFLQSKTKHKICNPQFDENFIFQVSSKSVTQRVLKFSVYHVNKKRKHQLLGQVLFPLKNETLAGDHHRIIWRDLEAKNLEPPSEFGDIQFCLSYNDYLSRLTVVVLRAKGLQLQEDRSVVSVFVKVSLMNHNKFVKCKRTSAVLGSVNPVYNETFSFKVDTNELDTASLSLVVLQTTEGNKSSPLGRVVVGPYMYTRGKELEHWGEMLRKPKELVKRWHALCRPTEP.

At 1–4 (MAEQ) the chain is on the extracellular side. Residues 5–27 (LAFLIGGIIGGLLLLIGVSCCLW) form a helical; Signal-anchor for type III membrane protein membrane-spanning segment. The Cytoplasmic segment spans residues 28–418 (RRFCATFTYE…WHALCRPTEP (391 aa)). C2 domains lie at 144–261 (CLGR…HRII) and 275–396 (EFGD…EHWG).

This sequence belongs to the synaptotagmin family. As to quaternary structure, homodimer. As to expression, isoform 1 and isoform 2 are expressed in heart, lung, skeletal muscle and testis; not detected in brain, liver and kidney. Isoform 1 is expressed in spleen.

The protein resides in the membrane. May be involved in the trafficking and exocytosis of secretory vesicles in non-neuronal tissues. The protein is Synaptotagmin-15 (Syt15) of Mus musculus (Mouse).